Consider the following 387-residue polypeptide: Exodeoxyribonuclease 7 large subunit (387 aa).

The protein belongs to the XseA family. In terms of assembly, heterooligomer composed of large and small subunits.

The protein localises to the cytoplasm. The enzyme catalyses Exonucleolytic cleavage in either 5'- to 3'- or 3'- to 5'-direction to yield nucleoside 5'-phosphates.. Functionally, bidirectionally degrades single-stranded DNA into large acid-insoluble oligonucleotides, which are then degraded further into small acid-soluble oligonucleotides. The protein is Exodeoxyribonuclease 7 large subunit of Campylobacter hominis (strain ATCC BAA-381 / DSM 21671 / CCUG 45161 / LMG 19568 / NCTC 13146 / CH001A).